The primary structure comprises 123 residues: Thioredoxin H-type 1 (123 aa).

Alanine 2 bears the N-acetylalanine mark. The region spanning 2–119 (AATAEVIPAG…IEAKLLKHSQ (118 aa)) is the Thioredoxin domain. Cysteine 45 and cysteine 48 form a disulfide bridge.

The protein belongs to the thioredoxin family. Plant H-type subfamily.

Its subcellular location is the cytoplasm. In terms of biological role, participates in various redox reactions through the reversible oxidation of the active center dithiol to a disulfide. The H form is known to activate a number of cytosolic enzymes. The chain is Thioredoxin H-type 1 (THL-1) from Brassica napus (Rape).